A 362-amino-acid chain; its full sequence is Innexin inx1 (362 aa).

At 1-28 the chain is on the cytoplasmic side; it reads MYKLLGSLKSYLKWQDIQTDNAVFRLHN. The chain crosses the membrane as a helical span at residues 29–49; it reads SFTTVLLLTCSLIITATQYVG. Residues 50 to 110 are Extracellular-facing; the sequence is QPISCIVNGV…DAKKYYTYYQ (61 aa). Residues 111-131 form a helical membrane-spanning segment; it reads WVCFVLFFQAMACYTPKFLWN. The Cytoplasmic portion of the chain corresponds to 132 to 177; it reads KFEGGLMRMIVMGLNITICTREEKEAKRDALLDYLIKHVKRHKLYA. Residues 178–198 traverse the membrane as a helical segment; sequence IRYWACEFLCCINIIVQMYLM. At 199 to 267 the chain is on the extracellular side; that stretch reads NRFFDGEFLS…LPLNIVNEKT (69 aa). A helical transmembrane segment spans residues 268–288; it reads YVFIWFWFWILLVLLIGLIVF. The Cytoplasmic segment spans residues 289–362; that stretch reads RGCIIFMPKF…VEPSKHDRAK (74 aa).

The protein belongs to the pannexin family. As to quaternary structure, heterooligomer of Inx2 and ogre. As to expression, in ovary, expressed in follicle cells. Expressed around the periphery of the embryo during cellular blastoderm formation. Repeating epidermal pattern emerges from stage 11, high levels of expression detected along the borders of each segment from stage 13. At stage 13, expressed in the dorsal branch of the tracheal system. During stage 15, detected in a few cells at each of the branch points of the dorsal trunk and at low levels in cardioblasts. In embryos, also expressed in the salivary gland and the hindgut (at protein level). At stage 17, expressed in the dorsal side of the CNS. Expressed in the imaginal wing disk. Expressed in larval CNS and in tissues outside of the CNS. In pupae, expressed in the CNS and in primary, secondary and tertiary pigment cells of the retina.

It is found in the cell membrane. The protein resides in the cell junction. It localises to the gap junction. The protein localises to the basolateral cell membrane. Structural component of the gap junctions. Essential for generation and/or maintenance of postembryonic neuroblasts and normal development of optic lobe. In Drosophila melanogaster (Fruit fly), this protein is Innexin inx1 (ogre).